The sequence spans 981 residues: Rab3 GTPase-activating protein catalytic subunit (981 aa).

6 positions are modified to phosphoserine: Ser83, Ser379, Ser536, Ser579, Ser581, and Ser590. A disordered region spans residues 532 to 558 (GKKTSLSDSTTSAYPGDAGKTGGQLGL). Positions 591–614 (DTEDLKGNGQESGKKGGPKEMANL) are disordered. Ser664 bears the Phosphoserine mark.

The protein belongs to the Rab3-GAP catalytic subunit family. As to quaternary structure, the Rab3 GTPase-activating complex is a heterodimer composed of Rab3gap1 and Rab3gap2. The Rab3 GTPase-activating complex interacts with DMXL2. Interacts with LMAN1. In terms of tissue distribution, in the eye, it is highly expressed within the lens, particularly in the anterior lens epithelium and in a ring corresponding to the equatorial region where anterior cells are differentiating into lens fibers. Also highly expressed in the retina.

The protein localises to the cytoplasm. Its subcellular location is the endoplasmic reticulum. It localises to the golgi apparatus. The protein resides in the cis-Golgi network. Functionally, catalytic subunit of the Rab3 GTPase-activating (Rab3GAP) complex composed of RAB3GAP1 and RAB3GAP2, which has GTPase-activating protein (GAP) activity towards various Rab3 subfamily members (RAB3A, RAB3B, RAB3C and RAB3D), RAB5A and RAB43, and guanine nucleotide exchange factor (GEF) activity towards RAB18. As part of the Rab3GAP complex, acts as a GAP for Rab3 proteins by converting active RAB3-GTP to the inactive form RAB3-GDP. Rab3 proteins are involved in regulated exocytosis of neurotransmitters and hormones. The Rab3GAP complex, acts as a GEF for RAB18 by promoting the conversion of inactive RAB18-GDP to the active form RAB18-GTP. Recruits and stabilizes RAB18 at the cis-Golgi membrane where RAB18 is most likely activated. Also involved in RAB18 recruitment at the endoplasmic reticulum (ER) membrane where it maintains proper ER structure. Required for normal eye and brain development. May participate in neurodevelopmental processes such as proliferation, migration and differentiation before synapse formation, and non-synaptic vesicular release of neurotransmitters. This Mus musculus (Mouse) protein is Rab3 GTPase-activating protein catalytic subunit.